The primary structure comprises 279 residues: Large ribosomal subunit protein uL2 (279 aa).

2 stretches are compositionally biased toward basic residues: residues 211 to 221 (GRSRWRGKTPH) and 256 to 279 (SYGKKTRDKKKPSTKFIVRGRKGK). The disordered stretch occupies residues 211-279 (GRSRWRGKTP…KFIVRGRKGK (69 aa)).

This sequence belongs to the universal ribosomal protein uL2 family. Part of the 50S ribosomal subunit. Forms a bridge to the 30S subunit in the 70S ribosome.

One of the primary rRNA binding proteins. Required for association of the 30S and 50S subunits to form the 70S ribosome, for tRNA binding and peptide bond formation. It has been suggested to have peptidyltransferase activity; this is somewhat controversial. Makes several contacts with the 16S rRNA in the 70S ribosome. This Oenococcus oeni (strain ATCC BAA-331 / PSU-1) protein is Large ribosomal subunit protein uL2.